The chain runs to 20 residues: U27-ctenitoxin-Pn1a (20 aa).

A disordered region spans residues 1–20; that stretch reads LAKRADICQPGKTSQRACET. The segment covering 11–20 has biased composition (polar residues); that stretch reads GKTSQRACET.

In terms of processing, contains 4 disulfide bonds. In terms of tissue distribution, expressed by the venom gland.

It localises to the secreted. Has a vascular smooth muscle contracting activity. Causes short-lived contractions of both arterial and venous rabbit vessels. This is U27-ctenitoxin-Pn1a from Phoneutria nigriventer (Brazilian armed spider).